Reading from the N-terminus, the 473-residue chain is Glutamate--tRNA ligase (473 aa).

Residues 13–23 (PSPTGFLHVGG) carry the 'HIGH' region motif. The short motif at 240-244 (KLSKR) is the 'KMSKS' region element. Lys-243 provides a ligand contact to ATP.

It belongs to the class-I aminoacyl-tRNA synthetase family. Glutamate--tRNA ligase type 1 subfamily. Monomer.

The protein localises to the cytoplasm. It catalyses the reaction tRNA(Glu) + L-glutamate + ATP = L-glutamyl-tRNA(Glu) + AMP + diphosphate. Its function is as follows. Catalyzes the attachment of glutamate to tRNA(Glu) in a two-step reaction: glutamate is first activated by ATP to form Glu-AMP and then transferred to the acceptor end of tRNA(Glu). The protein is Glutamate--tRNA ligase of Shewanella denitrificans (strain OS217 / ATCC BAA-1090 / DSM 15013).